The chain runs to 158 residues: uncharacterized protein (158 aa).

A run of 4 helical transmembrane segments spans residues F42–Y62, W71–A91, L102–L122, and E130–F150.

The protein localises to the cell membrane. This is an uncharacterized protein from Bacillus subtilis (strain 168).